Consider the following 139-residue polypeptide: Nucleoside diphosphate kinase (139 aa).

Positions 10, 58, 86, 92, 103, and 113 each coordinate ATP. His116 acts as the Pros-phosphohistidine intermediate in catalysis.

This sequence belongs to the NDK family. As to quaternary structure, homotetramer. The cofactor is Mg(2+).

It localises to the cytoplasm. The enzyme catalyses a 2'-deoxyribonucleoside 5'-diphosphate + ATP = a 2'-deoxyribonucleoside 5'-triphosphate + ADP. The catalysed reaction is a ribonucleoside 5'-diphosphate + ATP = a ribonucleoside 5'-triphosphate + ADP. Its function is as follows. Major role in the synthesis of nucleoside triphosphates other than ATP. The ATP gamma phosphate is transferred to the NDP beta phosphate via a ping-pong mechanism, using a phosphorylated active-site intermediate. This is Nucleoside diphosphate kinase from Caulobacter vibrioides (strain ATCC 19089 / CIP 103742 / CB 15) (Caulobacter crescentus).